The primary structure comprises 86 residues: Putative membrane protein insertion efficiency factor (86 aa).

The protein belongs to the UPF0161 family.

The protein resides in the cell inner membrane. In terms of biological role, could be involved in insertion of integral membrane proteins into the membrane. The sequence is that of Putative membrane protein insertion efficiency factor from Histophilus somni (strain 129Pt) (Haemophilus somnus).